Reading from the N-terminus, the 87-residue chain is Translation initiation factor IF-1 2 (87 aa).

The 72-residue stretch at 1–72 folds into the S1-like domain; the sequence is MAKEELLEMQ…SKGRITFRHI (72 aa).

This sequence belongs to the IF-1 family. In terms of assembly, component of the 30S ribosomal translation pre-initiation complex which assembles on the 30S ribosome in the order IF-2 and IF-3, IF-1 and N-formylmethionyl-tRNA(fMet); mRNA recruitment can occur at any time during PIC assembly.

The protein localises to the cytoplasm. One of the essential components for the initiation of protein synthesis. Stabilizes the binding of IF-2 and IF-3 on the 30S subunit to which N-formylmethionyl-tRNA(fMet) subsequently binds. Helps modulate mRNA selection, yielding the 30S pre-initiation complex (PIC). Upon addition of the 50S ribosomal subunit IF-1, IF-2 and IF-3 are released leaving the mature 70S translation initiation complex. The sequence is that of Translation initiation factor IF-1 2 from Dechloromonas aromatica (strain RCB).